The primary structure comprises 2131 residues: Beta/gamma crystallin domain-containing protein 1 (2131 aa).

5 disordered regions span residues M1–P53, K104–A370, T385–K674, R688–S707, and A723–L743. The segment covering P19–Q35 has biased composition (basic residues). The span at R135–K147 shows a compositional bias: polar residues. Composition is skewed to basic and acidic residues over residues L160–R169 and G184–E194. Polar residues predominate over residues A248–Q265. The segment covering S414–S424 has biased composition (basic residues). Residues A479–P490 show a composition bias toward low complexity. Phosphoserine occurs at positions 483 and 489. Composition is skewed to basic and acidic residues over residues P536–P546 and E562–P572. A compositionally biased stretch (low complexity) spans R609–A619. The segment covering A723–V733 has biased composition (basic and acidic residues). Phosphoserine occurs at positions 737 and 756. Disordered stretches follow at residues E758 to T791 and D837 to C889. Residues G769 to N782 are compositionally biased toward polar residues. Over residues S864–P881 the composition is skewed to low complexity. At S892 the chain carries Phosphoserine. Disordered regions lie at residues L926 to S947, Q1041 to S1101, S1271 to N1302, and S1316 to N1348. Position 933 is a phosphothreonine (T933). Residues S1055–N1089 are compositionally biased toward polar residues. Low complexity-rich tracts occupy residues S1091–S1101, S1271–T1288, and S1316–P1327. The span at S1328 to N1348 shows a compositional bias: basic and acidic residues. 12 consecutive Beta/gamma crystallin 'Greek key' domains span residues G1430–R1469, G1470–V1525, S1531–W1571, G1572–K1614, P1626–R1678, G1679–L1721, A1727–S1769, G1770–C1812, N1823–G1860, G1861–D1904, P1910–G1950, and G1951–V1992. A Ricin B-type lectin domain is found at K1994 to M2127.

It belongs to the beta/gamma-crystallin family.

Functionally, may function as suppressor of malignant melanoma. It may exert its effects through interactions with the cytoskeleton. The sequence is that of Beta/gamma crystallin domain-containing protein 1 from Homo sapiens (Human).